Here is a 219-residue protein sequence, read N- to C-terminus: Probable GTP-binding protein EngB (219 aa).

An EngB-type G domain is found at 24–207 (VQPEIAFAGR…HELIESWLRP (184 aa)). Residues 32–39 (GRSNAGKS), 59–63 (GRTQH), 81–84 (DLPG), 148–151 (TKCD), and 186–188 (FSA) contribute to the GTP site. Serine 39 and threonine 61 together coordinate Mg(2+).

Belongs to the TRAFAC class TrmE-Era-EngA-EngB-Septin-like GTPase superfamily. EngB GTPase family. Mg(2+) serves as cofactor.

Necessary for normal cell division and for the maintenance of normal septation. The polypeptide is Probable GTP-binding protein EngB (Burkholderia vietnamiensis (strain G4 / LMG 22486) (Burkholderia cepacia (strain R1808))).